The sequence spans 162 residues: MAFTFAAFCYMLTLVLCASLIFFIIWHIIAFDELRTDFKNPIEQGNPSRARERVKNVERICCLLRKLVVPEYCIHGLFCLMFMCAAEWVTLGLNIPLLFYHLWRYFHRPADGSEVMFDPVSIMNVDILNYCQKEAWCKLAFYLLSFFYYLYRVGATVRYVSA.

Residues 1–10 lie on the Cytoplasmic side of the membrane; the sequence is MAFTFAAFCY. A helical transmembrane segment spans residues 11–31; sequence MLTLVLCASLIFFIIWHIIAF. The Lumenal segment spans residues 32 to 72; sequence DELRTDFKNPIEQGNPSRARERVKNVERICCLLRKLVVPEY. The chain crosses the membrane as a helical span at residues 73 to 93; sequence CIHGLFCLMFMCAAEWVTLGL. At 94-138 the chain is on the cytoplasmic side; that stretch reads NIPLLFYHLWRYFHRPADGSEVMFDPVSIMNVDILNYCQKEAWCK. Residues 139-161 traverse the membrane as a helical segment; it reads LAFYLLSFFYYLYRVGATVRYVS. Residue Ala-162 is a topological domain, lumenal.

Belongs to the cornichon family.

The protein localises to the membrane. Regulates the trafficking and gating properties of AMPA-selective glutamate receptors (AMPARs). This chain is Protein cornichon homolog 2 (cnih2), found in Xenopus tropicalis (Western clawed frog).